We begin with the raw amino-acid sequence, 398 residues long: Dual-specificity RNA methyltransferase RlmN (398 aa).

Catalysis depends on glutamate 119, which acts as the Proton acceptor. The Radical SAM core domain occupies 125 to 364; the sequence is EGDRATLCVS…TIVRKTRGDD (240 aa). An intrachain disulfide couples cysteine 132 to cysteine 369. [4Fe-4S] cluster-binding residues include cysteine 139, cysteine 143, and cysteine 146. S-adenosyl-L-methionine is bound by residues 193–194, serine 225, 247–249, and asparagine 326; these read GE and SLH. Cysteine 369 serves as the catalytic S-methylcysteine intermediate.

Belongs to the radical SAM superfamily. RlmN family. It depends on [4Fe-4S] cluster as a cofactor.

It localises to the cytoplasm. The enzyme catalyses adenosine(2503) in 23S rRNA + 2 reduced [2Fe-2S]-[ferredoxin] + 2 S-adenosyl-L-methionine = 2-methyladenosine(2503) in 23S rRNA + 5'-deoxyadenosine + L-methionine + 2 oxidized [2Fe-2S]-[ferredoxin] + S-adenosyl-L-homocysteine. It carries out the reaction adenosine(37) in tRNA + 2 reduced [2Fe-2S]-[ferredoxin] + 2 S-adenosyl-L-methionine = 2-methyladenosine(37) in tRNA + 5'-deoxyadenosine + L-methionine + 2 oxidized [2Fe-2S]-[ferredoxin] + S-adenosyl-L-homocysteine. Specifically methylates position 2 of adenine 2503 in 23S rRNA and position 2 of adenine 37 in tRNAs. m2A2503 modification seems to play a crucial role in the proofreading step occurring at the peptidyl transferase center and thus would serve to optimize ribosomal fidelity. This is Dual-specificity RNA methyltransferase RlmN from Yersinia enterocolitica serotype O:8 / biotype 1B (strain NCTC 13174 / 8081).